Consider the following 79-residue polypeptide: RNA-binding protein KhpA (79 aa).

The KH domain maps to 32–79; that stretch reads FLEYHLNLDQSDVGRVIGRKGRTISAIRTIVYSVPTEYKKVRIVIDEK.

It belongs to the KhpA RNA-binding protein family. In terms of assembly, forms a complex with KhpB. KhpA and KhpB colocalize throughout the cell cycle, with some increase at midcell in dividing cells.

Its subcellular location is the cytoplasm. Its function is as follows. A probable RNA chaperone. Forms a complex with KhpB which presumably binds to about 170 cellular RNAs (mRNA, tRNA intergenic RNA and sRNAs); the proteins alone each bind the same set of RNAs. A mutation in this gene suppresses the requirement for PBP2b (penA, a transpeptidase) in peripheral peptidoglycan (PG) synthesis. Probably plays a role in PG homeostasis and regulating peripheral PG synthesis. The chain is RNA-binding protein KhpA from Streptococcus pneumoniae serotype 2 (strain D39 / NCTC 7466).